We begin with the raw amino-acid sequence, 701 residues long: Elongation factor G 1 (701 aa).

The 277-residue stretch at 5 to 281 folds into the tr-type G domain; that stretch reads SKYRNIGIFA…AVVDYLPSPT (277 aa). GTP is bound by residues 14–21, 78–82, and 132–135; these read AHVDAGKT, DTPGH, and NKLD.

The protein belongs to the TRAFAC class translation factor GTPase superfamily. Classic translation factor GTPase family. EF-G/EF-2 subfamily.

It localises to the cytoplasm. Its function is as follows. Catalyzes the GTP-dependent ribosomal translocation step during translation elongation. During this step, the ribosome changes from the pre-translocational (PRE) to the post-translocational (POST) state as the newly formed A-site-bound peptidyl-tRNA and P-site-bound deacylated tRNA move to the P and E sites, respectively. Catalyzes the coordinated movement of the two tRNA molecules, the mRNA and conformational changes in the ribosome. This chain is Elongation factor G 1, found in Colwellia psychrerythraea (strain 34H / ATCC BAA-681) (Vibrio psychroerythus).